A 79-amino-acid chain; its full sequence is Acyl carrier protein (79 aa).

In terms of domain architecture, Carrier spans 4–79 (AEIKDKVYDI…QAIDYIVNKK (76 aa)). The residue at position 39 (Ser39) is an O-(pantetheine 4'-phosphoryl)serine.

The protein belongs to the acyl carrier protein (ACP) family. Post-translationally, 4'-phosphopantetheine is transferred from CoA to a specific serine of apo-ACP by AcpS. This modification is essential for activity because fatty acids are bound in thioester linkage to the sulfhydryl of the prosthetic group.

It is found in the cytoplasm. The protein operates within lipid metabolism; fatty acid biosynthesis. Functionally, carrier of the growing fatty acid chain in fatty acid biosynthesis. This chain is Acyl carrier protein, found in Pelodictyon phaeoclathratiforme (strain DSM 5477 / BU-1).